A 76-amino-acid polypeptide reads, in one-letter code: Cytochrome c oxidase subunit 6C-2 (76 aa).

Topologically, residues glycine 4–glycine 14 are mitochondrial matrix. Residues leucine 15 to arginine 55 form a helical membrane-spanning segment. At asparagine 56–lysine 76 the chain is on the mitochondrial intermembrane side. Serine 74 is modified (phosphoserine).

This sequence belongs to the cytochrome c oxidase subunit 6c family. As to quaternary structure, component of the cytochrome c oxidase (complex IV, CIV), a multisubunit enzyme composed of 14 subunits. The complex is composed of a catalytic core of 3 subunits MT-CO1, MT-CO2 and MT-CO3, encoded in the mitochondrial DNA, and 11 supernumerary subunits COX4I, COX5A, COX5B, COX6A, COX6B, COX6C, COX7A, COX7B, COX7C, COX8 and NDUFA4, which are encoded in the nuclear genome. The complex exists as a monomer or a dimer and forms supercomplexes (SCs) in the inner mitochondrial membrane with NADH-ubiquinone oxidoreductase (complex I, CI) and ubiquinol-cytochrome c oxidoreductase (cytochrome b-c1 complex, complex III, CIII), resulting in different assemblies (supercomplex SCI(1)III(2)IV(1) and megacomplex MCI(2)III(2)IV(2)).

It is found in the mitochondrion inner membrane. It participates in energy metabolism; oxidative phosphorylation. In terms of biological role, component of the cytochrome c oxidase, the last enzyme in the mitochondrial electron transport chain which drives oxidative phosphorylation. The respiratory chain contains 3 multisubunit complexes succinate dehydrogenase (complex II, CII), ubiquinol-cytochrome c oxidoreductase (cytochrome b-c1 complex, complex III, CIII) and cytochrome c oxidase (complex IV, CIV), that cooperate to transfer electrons derived from NADH and succinate to molecular oxygen, creating an electrochemical gradient over the inner membrane that drives transmembrane transport and the ATP synthase. Cytochrome c oxidase is the component of the respiratory chain that catalyzes the reduction of oxygen to water. Electrons originating from reduced cytochrome c in the intermembrane space (IMS) are transferred via the dinuclear copper A center (CU(A)) of subunit 2 and heme A of subunit 1 to the active site in subunit 1, a binuclear center (BNC) formed by heme A3 and copper B (CU(B)). The BNC reduces molecular oxygen to 2 water molecules using 4 electrons from cytochrome c in the IMS and 4 protons from the mitochondrial matrix. The protein is Cytochrome c oxidase subunit 6C-2 (Cox6c2) of Rattus norvegicus (Rat).